Here is a 541-residue protein sequence, read N- to C-terminus: Tyrosine-protein kinase Yes (541 aa).

Residue G2 is the site of N-myristoyl glycine attachment. C3 carries the S-palmitoyl cysteine; in membrane form lipid modification. Y32 bears the Phosphotyrosine mark. The SH3 domain maps to 89–150 (GGVTIFVALY…PSNYVVPADS (62 aa)). In terms of domain architecture, SH2 spans 156–253 (WYFGKMGRKD…GLCHKLTTVC (98 aa)). The Protein kinase domain occupies 275-528 (LRLEVKLGQG…YIQSFLEDYF (254 aa)). ATP contacts are provided by residues 281-289 (LGQGCFGEV) and K303. A phosphotyrosine mark is found at Y334 and Y343. Residue D394 is the Proton acceptor of the active site. Y424 bears the Phosphotyrosine; by autocatalysis mark. Y535 is subject to Phosphotyrosine.

Belongs to the protein kinase superfamily. Tyr protein kinase family. SRC subfamily. As to quaternary structure, interacts with YAP1. Interacts with FASLG. Interacts with CTNND1; this interaction allows YES1-mediated activation of FYN and FER and subsequent phosphorylation of CTNND1. Interacts with CSF1R. Interacts with IL6ST/gp130. Interacts with SCRIB, when YES1 is in a closed conformation; the interaction facilitates YES1 autophosphorylation. Post-translationally, phosphorylated. Phosphorylation by CSK on the C-terminal tail maintains the enzyme in an inactive state. Autophosphorylation at Tyr-424 maintains enzyme activity by blocking CSK-mediated inhibition. Palmitoylation at Cys-3 promotes membrane localization.

It localises to the cell membrane. The protein resides in the cytoplasm. The protein localises to the cytoskeleton. It is found in the microtubule organizing center. Its subcellular location is the centrosome. It localises to the cytosol. The protein resides in the cell junction. The enzyme catalyses L-tyrosyl-[protein] + ATP = O-phospho-L-tyrosyl-[protein] + ADP + H(+). Functionally, non-receptor protein tyrosine kinase that is involved in the regulation of cell growth and survival, apoptosis, cell-cell adhesion, cytoskeleton remodeling, and differentiation. Stimulation by receptor tyrosine kinases (RTKs) including EGFR, PDGFR, CSF1R and FGFR leads to recruitment of YES1 to the phosphorylated receptor, and activation and phosphorylation of downstream substrates. Upon EGFR activation, promotes the phosphorylation of PARD3 to favor epithelial tight junction assembly. Participates in the phosphorylation of specific junctional components such as CTNND1 by stimulating the FYN and FER tyrosine kinases at cell-cell contacts. Upon T-cell stimulation by CXCL12, phosphorylates collapsin response mediator protein 2/DPYSL2 and induces T-cell migration. Participates in CD95L/FASLG signaling pathway and mediates AKT-mediated cell migration. Plays a role in cell cycle progression by phosphorylating the cyclin dependent kinase 4/CDK4 thus regulating the G1 phase. Also involved in G2/M progression and cytokinesis. Catalyzes phosphorylation of organic cation transporter OCT2 which induces its transport activity. This chain is Tyrosine-protein kinase Yes (Yes1), found in Mus musculus (Mouse).